Consider the following 572-residue polypeptide: Proline--tRNA ligase (572 aa).

It belongs to the class-II aminoacyl-tRNA synthetase family. ProS type 1 subfamily. Homodimer.

The protein localises to the cytoplasm. It catalyses the reaction tRNA(Pro) + L-proline + ATP = L-prolyl-tRNA(Pro) + AMP + diphosphate. Its function is as follows. Catalyzes the attachment of proline to tRNA(Pro) in a two-step reaction: proline is first activated by ATP to form Pro-AMP and then transferred to the acceptor end of tRNA(Pro). As ProRS can inadvertently accommodate and process non-cognate amino acids such as alanine and cysteine, to avoid such errors it has two additional distinct editing activities against alanine. One activity is designated as 'pretransfer' editing and involves the tRNA(Pro)-independent hydrolysis of activated Ala-AMP. The other activity is designated 'posttransfer' editing and involves deacylation of mischarged Ala-tRNA(Pro). The misacylated Cys-tRNA(Pro) is not edited by ProRS. The polypeptide is Proline--tRNA ligase (Klebsiella pneumoniae (strain 342)).